A 611-amino-acid chain; its full sequence is Dolabella-3,7-dien-18-ol synthase TPS06 (611 aa).

The Mg(2+) site is built by aspartate 363, aspartate 367, aspartate 507, threonine 511, and glutamate 515. Residues 363–367 (DNTFD) carry the DDXXD motif; degenerate motif.

It belongs to the terpene synthase family. Tpsa subfamily. Mg(2+) serves as cofactor. It depends on Mn(2+) as a cofactor. Predominantly expressed in flowers but also in stems, siliques, roots and leaves.

It localises to the cytoplasm. It carries out the reaction (2E,6E,10E)-geranylgeranyl diphosphate + H2O = (3E,7E)-dolabella-3,7-dien-18-ol + diphosphate. It functions in the pathway secondary metabolite biosynthesis; terpenoid biosynthesis. Its function is as follows. Involved in terpene biosynthesis in roots. Possesses sesquiterpene (C15) synthase activity and diterpene (C20) synthase activity in vitro. Possesses dolabella-3,7-dien-18-ol synthase activity in vitro. Catalyzes the formation of dolabella-3,7-dien-18-ol from geranylgeranyl diphosphate. The chain is Dolabella-3,7-dien-18-ol synthase TPS06 from Arabidopsis thaliana (Mouse-ear cress).